We begin with the raw amino-acid sequence, 194 residues long: Thymidine kinase (194 aa).

ATP-binding positions include 15–22 (GSMFSGKS) and 88–91 (DEVQ). The Proton acceptor role is filled by glutamate 89. Zn(2+) contacts are provided by cysteine 145, cysteine 148, cysteine 183, and cysteine 186.

The protein belongs to the thymidine kinase family. Homotetramer.

The protein localises to the cytoplasm. The enzyme catalyses thymidine + ATP = dTMP + ADP + H(+). This Bacillus anthracis (strain A0248) protein is Thymidine kinase.